Consider the following 125-residue polypeptide: Fluoride-specific ion channel FluC (125 aa).

4 helical membrane-spanning segments follow: residues 6–26 (AWIA…SGLV), 36–56 (WGTW…WALA), 68–88 (FIVL…AFEA), and 97–117 (WLLA…CVFL). Residues glycine 76 and threonine 79 each coordinate Na(+).

Belongs to the fluoride channel Fluc/FEX (TC 1.A.43) family.

It is found in the cell inner membrane. The catalysed reaction is fluoride(in) = fluoride(out). Na(+) is not transported, but it plays an essential structural role and its presence is essential for fluoride channel function. Functionally, fluoride-specific ion channel. Important for reducing fluoride concentration in the cell, thus reducing its toxicity. The sequence is that of Fluoride-specific ion channel FluC from Nitrosococcus oceani (strain ATCC 19707 / BCRC 17464 / JCM 30415 / NCIMB 11848 / C-107).